The sequence spans 138 residues: Putative pre-16S rRNA nuclease (138 aa).

The protein belongs to the YqgF nuclease family.

Its subcellular location is the cytoplasm. In terms of biological role, could be a nuclease involved in processing of the 5'-end of pre-16S rRNA. This Clostridium tetani (strain Massachusetts / E88) protein is Putative pre-16S rRNA nuclease.